Here is a 347-residue protein sequence, read N- to C-terminus: Phenylalanine--tRNA ligase alpha subunit (347 aa).

E261 serves as a coordination point for Mg(2+).

It belongs to the class-II aminoacyl-tRNA synthetase family. Phe-tRNA synthetase alpha subunit type 1 subfamily. In terms of assembly, tetramer of two alpha and two beta subunits. It depends on Mg(2+) as a cofactor.

Its subcellular location is the cytoplasm. The enzyme catalyses tRNA(Phe) + L-phenylalanine + ATP = L-phenylalanyl-tRNA(Phe) + AMP + diphosphate + H(+). This is Phenylalanine--tRNA ligase alpha subunit from Streptococcus equi subsp. zooepidemicus (strain MGCS10565).